The primary structure comprises 282 residues: Pantothenate synthetase (282 aa).

Position 30–37 (30–37 (MGYLHEGH)) interacts with ATP. The active-site Proton donor is the histidine 37. Glutamine 61 is a binding site for (R)-pantoate. Glutamine 61 is a beta-alanine binding site. 147–150 (GQKD) contributes to the ATP binding site. A (R)-pantoate-binding site is contributed by glutamine 153. Residues valine 176 and 184-187 (MSSR) contribute to the ATP site.

This sequence belongs to the pantothenate synthetase family. Homodimer.

The protein resides in the cytoplasm. The enzyme catalyses (R)-pantoate + beta-alanine + ATP = (R)-pantothenate + AMP + diphosphate + H(+). Its pathway is cofactor biosynthesis; (R)-pantothenate biosynthesis; (R)-pantothenate from (R)-pantoate and beta-alanine: step 1/1. Catalyzes the condensation of pantoate with beta-alanine in an ATP-dependent reaction via a pantoyl-adenylate intermediate. The chain is Pantothenate synthetase from Caldicellulosiruptor bescii (strain ATCC BAA-1888 / DSM 6725 / KCTC 15123 / Z-1320) (Anaerocellum thermophilum).